The following is a 78-amino-acid chain: Large ribosomal subunit protein bL31 (78 aa).

Zn(2+) is bound by residues C16, C18, C38, and C41.

Belongs to the bacterial ribosomal protein bL31 family. Type A subfamily. Part of the 50S ribosomal subunit. Requires Zn(2+) as cofactor.

Functionally, binds the 23S rRNA. The chain is Large ribosomal subunit protein bL31 from Frankia casuarinae (strain DSM 45818 / CECT 9043 / HFP020203 / CcI3).